Here is a 197-residue protein sequence, read N- to C-terminus: Protein TIFY 9 (197 aa).

Residues 57–73 show a composition bias toward polar residues; the sequence is STGNNSDSSAKSRSVPS. Residues 57 to 84 are disordered; that stretch reads STGNNSDSSAKSRSVPSTPREDQPQIPI. In terms of domain architecture, Tify spans 98 to 132; it reads LVSGTVPMTIFYNGSVSVFQVSRNKAGEIMKVANE. Residues 168–193 carry the Jas motif; it reads PIARRKSLQRFLEKRKERLVSTSPYY. Residues 170–177 carry the Nuclear localization signal motif; that stretch reads ARRKSLQR.

It belongs to the TIFY/JAZ family. Homo- and heterodimer. Interacts with MYC2, MYC3, MYC4, AFPH2/NINJA, TIFY10A/JAZ1, TIFY10B/JAZ2, TIFY6B/JAZ3, TIFY6A/JAZ4, TIFY11B/JAZ6, TIFY5A/JAZ8, TIFY7/JAZ9, TIFY3A/JAZ11 and TIFY3B/JAZ12. Isoform 1 and isoform 2 interact with COI1. Isoform 3 does not interact with COI1. Interacts with RHD6 and RSL1. Ubiquitinated. Targeted for degradation by the SCF(COI1) E3 ubiquitin ligase-proteasome pathway during jasmonate signaling.

The protein localises to the nucleus. Functionally, repressor of jasmonate (JA) responses that lacks the entire Jas domain and possesses severe JA insensitivity and resistance to JA-induced degradation. Acts as an endogenous repressor of JA signal output in JA-stimulated cells. Modulator of JA-controlled growth inhibition in response to wounding. Repressor of jasmonate (JA) responses that lacks part of the Jas domain and possesses JA insensitivity and partial resistance to JA-induced degradation. In terms of biological role, repressor of jasmonate (JA) responses. Interacts with and suppresses RHD6 and RSL1 transcription factor activities to negatively regulate jasmonate-stimulated root hair development. The chain is Protein TIFY 9 (TIFY9) from Arabidopsis thaliana (Mouse-ear cress).